A 164-amino-acid polypeptide reads, in one-letter code: 16S rRNA aminocarboxypropyltransferase (164 aa).

S-adenosyl-L-methionine is bound by residues Thr18, Ile66, Leu87, and Ser106.

Belongs to the TDD superfamily. TSR3 family.

The protein resides in the cytoplasm. The catalysed reaction is an N(1)-methylpseudouridine in rRNA + S-adenosyl-L-methionine = N(1)-methyl-N(3)-[(3S)-3-amino-3-carboxypropyl]pseudouridine in rRNA + S-methyl-5'-thioadenosine + H(+). Its function is as follows. Aminocarboxypropyltransferase that catalyzes the aminocarboxypropyl transfer on pseudouridine corresponding to position 914 in M.jannaschii 16S rRNA. It constitutes the last step in biosynthesis of the hypermodified N1-methyl-N3-(3-amino-3-carboxypropyl) pseudouridine (m1acp3-Psi). The sequence is that of 16S rRNA aminocarboxypropyltransferase from Thermoplasma volcanium (strain ATCC 51530 / DSM 4299 / JCM 9571 / NBRC 15438 / GSS1).